The primary structure comprises 342 residues: L-threonine 3-dehydrogenase (342 aa).

C38 serves as a coordination point for Zn(2+). Residues T40 and H43 each act as charge relay system in the active site. Zn(2+)-binding residues include H63, E64, C93, C96, C99, and C107. NAD(+) contacts are provided by residues I175, D195, R200, 262-264, and 286-287; these read LGI and IY.

The protein belongs to the zinc-containing alcohol dehydrogenase family. Homotetramer. Zn(2+) is required as a cofactor.

The protein resides in the cytoplasm. The enzyme catalyses L-threonine + NAD(+) = (2S)-2-amino-3-oxobutanoate + NADH + H(+). The protein operates within amino-acid degradation; L-threonine degradation via oxydo-reductase pathway; glycine from L-threonine: step 1/2. Functionally, catalyzes the NAD(+)-dependent oxidation of L-threonine to 2-amino-3-ketobutyrate. This Burkholderia ambifaria (strain MC40-6) protein is L-threonine 3-dehydrogenase.